Reading from the N-terminus, the 550-residue chain is Transcription factor p65 (550 aa).

Position 1 is an N-acetylmethionine (M1). Residues 16–190 (ASGPYVEIIE…HPIFDNRAPN (175 aa)) form the RHD domain. Residue K37 forms a Glycyl lysine isopeptide (Lys-Gly) (interchain with G-Cter in SUMO3) linkage. C38 bears the Cysteine persulfide; alternate mark. At C38 the chain carries S-nitrosocysteine; alternate. 4 positions are modified to N6-acetyllysine: K122, K123, K218, and K221. Glycyl lysine isopeptide (Lys-Gly) (interchain with G-Cter in SUMO3); alternate cross-links involve residues K122 and K123. T254 carries the phosphothreonine modification. Phosphoserine occurs at positions 276 and 281. The Nuclear localization signal motif lies at 301–304 (KRKR). N6-acetyllysine; alternate is present on K310. K310 is subject to N6-methyllysine. A Phosphoserine modification is found at S311. Transcriptional activation domain regions lie at residues 342–388 (PKPA…APVL) and 414–476 (PGPP…EFQQ). T434 bears the Phosphothreonine mark. S468 is modified (phosphoserine). T505 carries the phosphothreonine modification. A transcriptional activation domain 2 region spans residues 520-550 (TSGLPNGLSGDEDFSSIADMDFSALLSQISS). A Phosphoserine modification is found at S535. The 9aaTAD motif lies at 535 to 543 (SIADMDFSA).

As to quaternary structure, component of the NF-kappa-B p65-p50 complex. Component of the NF-kappa-B p65-c-Rel complex. Homodimer; component of the NF-kappa-B p65-p65 complex. Component of the NF-kappa-B p65-p52 complex. May interact with ETHE1. Binds TLE5 and TLE1. Interacts with TP53BP2. Binds to and is phosphorylated by the activated form of either RPS6KA4 or RPS6KA5. Interacts with ING4 and this interaction may be indirect. Interacts with CARM1, USP48 and UNC5CL. Interacts with IRAK1BP1. Interacts with NFKBID. Interacts with NFKBIA. Interacts with GSK3B. Interacts with NFKBIB. Interacts with NFKBIE. Interacts with NFKBIZ. Interacts with EHMT1 (via ANK repeats). Part of a 70-90 kDa complex at least consisting of CHUK, IKBKB, NFKBIA, RELA, ELP1 and MAP3K14. Interacts with HDAC3; HDAC3 mediates the deacetylation of RELA. Interacts with HDAC1; the interaction requires non-phosphorylated RELA. Interacts with CBP; the interaction requires phosphorylated RELA. Interacts (phosphorylated at 'Thr-254') with PIN1; the interaction inhibits p65 binding to NFKBIA. Interacts with SOCS1. Interacts with UXT. Interacts with MTDH and PHF11. Interacts with ARRB2. Interacts with NFKBIA (when phosphorylated), the interaction is direct; phosphorylated NFKBIA is part of a SCF(BTRC)-like complex lacking CUL1. Interacts with RNF25. Interacts (via C-terminus) with DDX1. Interacts with UFL1 and COMMD1. Interacts with BRMS1; this promotes deacetylation of 'Lys-310'. Interacts with NOTCH2. Directly interacts with MEN1; this interaction represses NFKB-mediated transactivation. Interacts with AKIP1, which promotes the phosphorylation and nuclear retention of RELA. Interacts (via the RHD) with GFI1; the interaction, after bacterial lipopolysaccharide (LPS) stimulation, inhibits the transcriptional activity by interfering with the DNA-binding activity to target gene promoter DNA. Interacts (when acetylated at Lys-310) with BRD4; leading to activation of the NF-kappa-B pathway. Interacts with MEFV. Interacts with CLOCK. Interacts (via N-terminus) with CPEN1; this interaction induces proteolytic cleavage of p65/RELA subunit and inhibition of NF-kappa-B transcriptional activity. Interacts with FOXP3. Interacts with CDK5RAP3; stimulates the interaction of RELA with HDAC1, HDAC2 and HDAC3 thereby inhibiting NF-kappa-B transcriptional activity. Interacts with DHX9; this interaction is direct and activates NF-kappa-B-mediated transcription. Interacts with LRRC25. Interacts with TBX21. Interacts with KAT2A. Interacts with ZBTB7A; involved in the control by RELA of the accessibility of target gene promoters. Directly interacts with DDX3X; this interaction may trap RELA in the cytoplasm, impairing nuclear relocalization upon TNF activating signals. Interacts with PHF2. Interacts with MKRN2; the interaction leads to its polyubiquitination and proteasome-dependent degradation. Interacts with ECSIT. Interacts with RAB28; the interaction contributes to RELA transport from cytoplasm to nucleus. In terms of processing, ubiquitinated by RNF182, leading to its proteasomal degradation. Degradation is required for termination of NF-kappa-B response. Polyubiquitinated via 'Lys-29'-linked ubiquitin; leading to lysosomal degradation. Monomethylated at Lys-310 by SETD6. Monomethylation at Lys-310 is recognized by the ANK repeats of EHMT1 and promotes the formation of repressed chromatin at target genes, leading to down-regulation of NF-kappa-B transcription factor activity. Phosphorylation at Ser-311 disrupts the interaction with EHMT1 without preventing monomethylation at Lys-310 and relieves the repression of target genes. Post-translationally, phosphorylation at Ser-311 disrupts the interaction with EHMT1 and promotes transcription factor activity. Phosphorylation on Ser-535 stimulates acetylation on Lys-310 and interaction with CBP; the phosphorylated and acetylated forms show enhanced transcriptional activity. Phosphorylation at Ser-276 by RPS6KA4 and RPS6KA5 promotes its transactivation and transcriptional activities. In terms of processing, phosphorylation at Ser-75 by herpes simplex virus 1/HHV-1 inhibits NF-kappa-B activation. Reversibly acetylated; the acetylation seems to be mediated by CBP, the deacetylation by HDAC3 and SIRT2. Acetylation at Lys-122 enhances DNA binding and impairs association with NFKBIA. Acetylation at Lys-310 is required for full transcriptional activity in the absence of effects on DNA binding and NFKBIA association. Acetylation at Lys-310 promotes interaction with BRD4. Acetylation can also lower DNA-binding and results in nuclear export. Interaction with BRMS1 promotes deacetylation of Lys-310. Lys-310 is deacetylated by SIRT2. Post-translationally, S-nitrosylation of Cys-38 inactivates the enzyme activity. In terms of processing, sulfhydration at Cys-38 mediates the anti-apoptotic activity by promoting the interaction with RPS3 and activating the transcription factor activity. Sumoylation by PIAS3 negatively regulates DNA-bound activated NF-kappa-B. Post-translationally, proteolytically cleaved within a conserved N-terminus region required for base-specific contact with DNA in a CPEN1-mediated manner, and hence inhibits NF-kappa-B transcriptional activity.

Its subcellular location is the nucleus. The protein localises to the cytoplasm. Its function is as follows. NF-kappa-B is a pleiotropic transcription factor present in almost all cell types and is the endpoint of a series of signal transduction events that are initiated by a vast array of stimuli related to many biological processes such as inflammation, immunity, differentiation, cell growth, tumorigenesis and apoptosis. NF-kappa-B is a homo- or heterodimeric complex formed by the Rel-like domain-containing proteins RELA/p65, RELB, NFKB1/p105, NFKB1/p50, REL and NFKB2/p52. The heterodimeric RELA-NFKB1 complex appears to be most abundant one. The dimers bind at kappa-B sites in the DNA of their target genes and the individual dimers have distinct preferences for different kappa-B sites that they can bind with distinguishable affinity and specificity. Different dimer combinations act as transcriptional activators or repressors, respectively. The NF-kappa-B heterodimeric RELA-NFKB1 and RELA-REL complexes, for instance, function as transcriptional activators. NF-kappa-B is controlled by various mechanisms of post-translational modification and subcellular compartmentalization as well as by interactions with other cofactors or corepressors. NF-kappa-B complexes are held in the cytoplasm in an inactive state complexed with members of the NF-kappa-B inhibitor (I-kappa-B) family. In a conventional activation pathway, I-kappa-B is phosphorylated by I-kappa-B kinases (IKKs) in response to different activators, subsequently degraded thus liberating the active NF-kappa-B complex which translocates to the nucleus. The inhibitory effect of I-kappa-B on NF-kappa-B through retention in the cytoplasm is exerted primarily through the interaction with RELA. RELA shows a weak DNA-binding site which could contribute directly to DNA binding in the NF-kappa-B complex. Besides its activity as a direct transcriptional activator, it is also able to modulate promoters accessibility to transcription factors and thereby indirectly regulate gene expression. Associates with chromatin at the NF-kappa-B promoter region via association with DDX1. Essential for cytokine gene expression in T-cells. The NF-kappa-B homodimeric RELA-RELA complex appears to be involved in invasin-mediated activation of IL-8 expression. Key transcription factor regulating the IFN response during SARS-CoV-2 infection. The protein is Transcription factor p65 of Rattus norvegicus (Rat).